Here is a 345-residue protein sequence, read N- to C-terminus: GTP cyclohydrolase-2 (345 aa).

The interval 1–27 (MTIDNYDNSKQDSSKYEVSGTGDGRNG) is disordered. Position 143–147 (143–147 (RIHSE)) interacts with GTP. Zn(2+)-binding residues include Cys-148, Cys-159, and Cys-161. GTP contacts are provided by residues Gln-164, 197–199 (EGR), and Thr-219. Asp-231 functions as the Proton acceptor in the catalytic mechanism. Arg-233 acts as the Nucleophile in catalysis. 2 residues coordinate GTP: Thr-254 and Lys-259. The segment at 312–345 (PLKLHTNPQPTETSEAQNQNRMNSALSSTSTLAI) is disordered. The span at 317-345 (TNPQPTETSEAQNQNRMNSALSSTSTLAI) shows a compositional bias: polar residues.

This sequence belongs to the GTP cyclohydrolase II family. The cofactor is Zn(2+).

It catalyses the reaction GTP + 4 H2O = 2,5-diamino-6-hydroxy-4-(5-phosphoribosylamino)-pyrimidine + formate + 2 phosphate + 3 H(+). Its pathway is cofactor biosynthesis; riboflavin biosynthesis; 5-amino-6-(D-ribitylamino)uracil from GTP: step 1/4. Its function is as follows. Catalyzes the conversion of GTP to 2,5-diamino-6-ribosylamino-4(3H)-pyrimidinone 5'-phosphate (DARP), formate and pyrophosphate. The sequence is that of GTP cyclohydrolase-2 (RIB1) from Saccharomyces cerevisiae (strain ATCC 204508 / S288c) (Baker's yeast).